We begin with the raw amino-acid sequence, 159 residues long: 2-C-methyl-D-erythritol 2,4-cyclodiphosphate synthase (159 aa).

Aspartate 10 and histidine 12 together coordinate a divalent metal cation. 4-CDP-2-C-methyl-D-erythritol 2-phosphate contacts are provided by residues 10-12 (DVH) and 36-37 (HS). Histidine 44 provides a ligand contact to a divalent metal cation. Residues 58–60 (DIG), 63–67 (FPDTD), 102–108 (AQAPKMA), 134–137 (TTTE), phenylalanine 141, and arginine 144 contribute to the 4-CDP-2-C-methyl-D-erythritol 2-phosphate site.

Belongs to the IspF family. As to quaternary structure, homotrimer. It depends on a divalent metal cation as a cofactor.

It catalyses the reaction 4-CDP-2-C-methyl-D-erythritol 2-phosphate = 2-C-methyl-D-erythritol 2,4-cyclic diphosphate + CMP. It participates in isoprenoid biosynthesis; isopentenyl diphosphate biosynthesis via DXP pathway; isopentenyl diphosphate from 1-deoxy-D-xylulose 5-phosphate: step 4/6. Involved in the biosynthesis of isopentenyl diphosphate (IPP) and dimethylallyl diphosphate (DMAPP), two major building blocks of isoprenoid compounds. Catalyzes the conversion of 4-diphosphocytidyl-2-C-methyl-D-erythritol 2-phosphate (CDP-ME2P) to 2-C-methyl-D-erythritol 2,4-cyclodiphosphate (ME-CPP) with a corresponding release of cytidine 5-monophosphate (CMP). The polypeptide is 2-C-methyl-D-erythritol 2,4-cyclodiphosphate synthase (Shewanella frigidimarina (strain NCIMB 400)).